The following is a 696-amino-acid chain: Elongation factor G (696 aa).

The region spanning 8–290 (ERYRNIGIMA…AVLDYLPSPL (283 aa)) is the tr-type G domain. GTP is bound by residues 17–24 (AHIDAGKT), 88–92 (DTPGH), and 142–145 (NKMD).

It belongs to the TRAFAC class translation factor GTPase superfamily. Classic translation factor GTPase family. EF-G/EF-2 subfamily.

It localises to the cytoplasm. In terms of biological role, catalyzes the GTP-dependent ribosomal translocation step during translation elongation. During this step, the ribosome changes from the pre-translocational (PRE) to the post-translocational (POST) state as the newly formed A-site-bound peptidyl-tRNA and P-site-bound deacylated tRNA move to the P and E sites, respectively. Catalyzes the coordinated movement of the two tRNA molecules, the mRNA and conformational changes in the ribosome. This Nitrosomonas eutropha (strain DSM 101675 / C91 / Nm57) protein is Elongation factor G.